The sequence spans 343 residues: Tumor necrosis factor receptor superfamily member wgn (343 aa).

Disordered stretches follow at residues 1–44 (MMPP…IGGS) and 74–96 (SSAA…SIAS). The first 76 residues, 1–76 (MMPPRLPGGH…ATSASSSSSA (76 aa)), serve as a signal peptide directing secretion. The span at 13-24 (AMRSRSSSSGHH) shows a compositional bias: low complexity. The segment covering 29–39 (FHKRRRRRQQH) has biased composition (basic residues). Residues 77 to 201 (ANTDIAPPDP…AAWVLDWQTG (125 aa)) are Extracellular-facing. One copy of the TNFR-Cys repeat lies at 99-137 (PCAPQHWWDSQRDRCTPCTRCQGEMIPLRPCQLHTDTIC). Intrachain disulfides connect C100-C113, C116-C129, and C119-C137. A helical transmembrane segment spans residues 202 to 222 (VLYVAVLTCLVFFSVAACILI). At 223 to 343 (HHMRQWRRME…GVRGCSGLKG (121 aa)) the chain is on the cytoplasmic side. A coiled-coil region spans residues 225-257 (MRQWRRMERRLDQDVEELSTKLMAKLAEVQSLD).

As to quaternary structure, monomer. Interacts (via extracellular cystein-rich domain) with egr (via secreted TNF-homology soluble form); forms heterohexamers when 3 copies associate with egr trimers. Interacts with Traf6. Interacts with Moe. In terms of tissue distribution, expressed in the adult midgut; under normal conditions expressed at higher levels than the other TNF receptor grnd.

The protein localises to the cell membrane. It localises to the cytoplasmic vesicle membrane. Functionally, receptor for egr. Involved in induction of apoptosis by triggering JNK signaling. Mediates the tumor suppressor activity of egr which eliminates oncogenic cells from epithelia, thereby maintaining epithelial integrity. Following UV-induced epidermal damage, binds to egr released from apoptotic epidermal cells and plays a role in development of thermal allodynia, a responsiveness to subthreshold thermal stimuli which are not normally perceived as noxious. Together with Moe, involved in control of axon targeting of R8 and R2-R5 photoreceptors, independent of egr. The sequence is that of Tumor necrosis factor receptor superfamily member wgn from Drosophila melanogaster (Fruit fly).